A 208-amino-acid polypeptide reads, in one-letter code: Small ribosomal subunit protein uS4 (208 aa).

One can recognise an S4 RNA-binding domain in the interval 98-158 (RRLDNVVYRL…EKSRKIACIN (61 aa)).

It belongs to the universal ribosomal protein uS4 family. As to quaternary structure, part of the 30S ribosomal subunit. Contacts protein S5. The interaction surface between S4 and S5 is involved in control of translational fidelity.

In terms of biological role, one of the primary rRNA binding proteins, it binds directly to 16S rRNA where it nucleates assembly of the body of the 30S subunit. With S5 and S12 plays an important role in translational accuracy. In Geobacter sulfurreducens (strain ATCC 51573 / DSM 12127 / PCA), this protein is Small ribosomal subunit protein uS4.